Here is a 252-residue protein sequence, read N- to C-terminus: Vacuolar-sorting protein dot2 (252 aa).

This sequence belongs to the SNF8 family. As to quaternary structure, component of the endosomal sorting complex required for transport II (ESCRT-II).

Its subcellular location is the cytoplasm. It is found in the nucleus. The protein localises to the endosome membrane. Component of the endosomal sorting complex required for transport II (ESCRT-II), which is required for multivesicular body (MVB) formation and sorting of endosomal cargo proteins into MVBs. The MVB pathway mediates delivery of transmembrane proteins into the lumen of the lysosome for degradation. The ESCRT-II complex is probably involved in the recruitment of the ESCRT-III complex. Negatively regulates meiotic spindle pole body maturation via indirect regulation of the pcp1 gene. Required for efficient entry into pre-meiotic S phase. This Schizosaccharomyces pombe (strain 972 / ATCC 24843) (Fission yeast) protein is Vacuolar-sorting protein dot2 (dot2).